We begin with the raw amino-acid sequence, 1240 residues long: Protein MMS22-like (1240 aa).

Positions 1–11 (MESEFSQSLTP) are enriched in polar residues. The interval 1-26 (MESEFSQSLTPPVSPSALNHYGESAP) is disordered.

Belongs to the MMS22 family. MMS22L subfamily. As to quaternary structure, component of the MMS22L-TONSL complex.

Its subcellular location is the nucleus. It is found in the chromosome. In terms of biological role, component of the MMS22L-TONSL complex, a complex that promotes homologous recombination-mediated repair of double-strand breaks (DSBs) at stalled or collapsed replication forks. The MMS22L-TONSL complex is required to maintain genome integrity during DNA replication. It mediates the assembly of RAD51 filaments on single-stranded DNA (ssDNA): the MMS22L-TONSL complex is recruited to DSBs following histone replacement by histone chaperones and eviction of the replication protein A complex (RPA/RP-A) from DSBs. Following recruitment to DSBs, the TONSL-MMS22L complex promotes recruitment of RAD51 filaments and subsequent homologous recombination. Within the complex, MMS22L acts by binding ssDNA. This is Protein MMS22-like (mms22l) from Danio rerio (Zebrafish).